The chain runs to 234 residues: Carboxy-S-adenosyl-L-methionine synthase (234 aa).

S-adenosyl-L-methionine contacts are provided by residues Tyr35, 60–62 (GCS), 83–84 (DN), 109–110 (DI), Asn124, and Arg191.

This sequence belongs to the class I-like SAM-binding methyltransferase superfamily. Cx-SAM synthase family. As to quaternary structure, homodimer.

The catalysed reaction is prephenate + S-adenosyl-L-methionine = carboxy-S-adenosyl-L-methionine + 3-phenylpyruvate + H2O. Its function is as follows. Catalyzes the conversion of S-adenosyl-L-methionine (SAM) to carboxy-S-adenosyl-L-methionine (Cx-SAM). This chain is Carboxy-S-adenosyl-L-methionine synthase, found in Campylobacter concisus (strain 13826).